A 512-amino-acid chain; its full sequence is Ascofuranone/ascochlorin biosynthesis clusters transcription regulator (512 aa).

Residues 14–49 constitute a DNA-binding region (zn(2)-C6 fungal-type); the sequence is CDRCHSQKLRCPRSVEPEKANPEEPCSRCRKAGVPC. Disordered regions lie at residues 54–87, 118–148, and 325–351; these read RGKV…PYDI, GSGS…DPLM, and GCTR…DGSI. Residues 56-70 are compositionally biased toward basic residues; sequence KVGRPSKATKKKSAR. Composition is skewed to low complexity over residues 118 to 127 and 327 to 342; these read GSGSVTTSAS and TRSS…GSSM.

It localises to the nucleus. Functionally, transcription factor that regulates the expression of the asc-1 and asc-2 gene clusters that mediate the biosynthesis of both ascochlorin and ascofuranone, a strong inhibitor of cyanide-insensitive alternative oxidases and a promising drug candidate against African trypanosomiasis. Binds the 5'-CGGYGNNTTW-3' motif within promoters of the target genes. In Acremonium egyptiacum (Oospora egyptiaca), this protein is Ascofuranone/ascochlorin biosynthesis clusters transcription regulator.